The sequence spans 270 residues: Peflin (270 aa).

Residues 1–97 form a disordered region; sequence MSYQYGQGYS…YRQQGSAGNV (97 aa). 5 tandem repeats follow at residues 22–30, 44–54, 62–70, 72–81, and 83–91. Residues 22 to 91 form a 5 X 9 AA approximate tandem repeat of [AP]-P-G-G-P-Y-G-G-P-P region; the sequence is PPRAPYAGGP…QPQGGPYRQQ (70 aa). Composition is skewed to low complexity over residues 26–47 and 55–66; these read PYAG…PPGQ and YGSYGQPGPRAP. Positions 67-84 are enriched in gly residues; the sequence is YGGGQAPGGPYGGYGQPQ. 5 consecutive EF-hand domains span residues 100–135, 141–169, 170–202, 203–239, and 240–269; these read GVNP…FNNS, TCIM…WTFL, QQWR…MGYN, LSPQ…LQSM, and TQAF…ITRL. Ca(2+) is bound by residues D113, D115, S117, Y119, and E124. Residues D180, D182, S184, S186, and E191 each coordinate Ca(2+).

As to quaternary structure, heterodimer; heterodimerizes (via the EF-hand 5) with pdcd6.

The protein resides in the cytoplasm. It is found in the endoplasmic reticulum. Its subcellular location is the membrane. The protein localises to the cytoplasmic vesicle. It localises to the COPII-coated vesicle membrane. Calcium-binding protein that acts as an adapter that bridges unrelated proteins or stabilizes weak protein-protein complexes in response to calcium. Acts as a negative regulator of ER-Golgi transport. The polypeptide is Peflin (Danio rerio (Zebrafish)).